The chain runs to 406 residues: 4-hydroxy-3-methylbut-2-en-1-yl diphosphate synthase (ferredoxin) (406 aa).

Cys-315, Cys-318, Cys-349, and Glu-356 together coordinate [4Fe-4S] cluster.

This sequence belongs to the IspG family. [4Fe-4S] cluster is required as a cofactor.

It carries out the reaction (2E)-4-hydroxy-3-methylbut-2-enyl diphosphate + 2 oxidized [2Fe-2S]-[ferredoxin] + H2O = 2-C-methyl-D-erythritol 2,4-cyclic diphosphate + 2 reduced [2Fe-2S]-[ferredoxin] + H(+). It participates in isoprenoid biosynthesis; isopentenyl diphosphate biosynthesis via DXP pathway; isopentenyl diphosphate from 1-deoxy-D-xylulose 5-phosphate: step 5/6. In terms of biological role, converts 2C-methyl-D-erythritol 2,4-cyclodiphosphate (ME-2,4cPP) into 1-hydroxy-2-methyl-2-(E)-butenyl 4-diphosphate. The protein is 4-hydroxy-3-methylbut-2-en-1-yl diphosphate synthase (ferredoxin) of Trichodesmium erythraeum (strain IMS101).